A 728-amino-acid chain; its full sequence is Polyribonucleotide nucleotidyltransferase (728 aa).

Positions 488 and 494 each coordinate Mg(2+). The KH domain maps to Pro555–Ile614. An S1 motif domain is found at Gly624–Lys692. The segment at Ile702 to Gln728 is disordered. Residues Ala710–Ala721 show a composition bias toward low complexity.

The protein belongs to the polyribonucleotide nucleotidyltransferase family. Mg(2+) serves as cofactor.

The protein resides in the cytoplasm. The enzyme catalyses RNA(n+1) + phosphate = RNA(n) + a ribonucleoside 5'-diphosphate. Its function is as follows. Involved in mRNA degradation. Catalyzes the phosphorolysis of single-stranded polyribonucleotides processively in the 3'- to 5'-direction. This is Polyribonucleotide nucleotidyltransferase from Cupriavidus pinatubonensis (strain JMP 134 / LMG 1197) (Cupriavidus necator (strain JMP 134)).